The primary structure comprises 475 residues: Ribulose bisphosphate carboxylase large chain (475 aa).

Positions 1-2 (MS) are excised as a propeptide. At proline 3 the chain carries N-acetylproline. Lysine 14 bears the N6,N6,N6-trimethyllysine mark. Asparagine 123 and threonine 173 together coordinate substrate. Lysine 175 serves as the catalytic Proton acceptor. A substrate-binding site is contributed by lysine 177. Mg(2+) is bound by residues lysine 201, aspartate 203, and glutamate 204. Residue lysine 201 is modified to N6-carboxylysine. Histidine 294 acts as the Proton acceptor in catalysis. Substrate-binding residues include arginine 295, histidine 327, and serine 379.

It belongs to the RuBisCO large chain family. Type I subfamily. As to quaternary structure, heterohexadecamer of 8 large chains and 8 small chains; disulfide-linked. The disulfide link is formed within the large subunit homodimers. Mg(2+) is required as a cofactor. Post-translationally, the disulfide bond which can form in the large chain dimeric partners within the hexadecamer appears to be associated with oxidative stress and protein turnover.

The protein localises to the plastid. It localises to the chloroplast. The catalysed reaction is 2 (2R)-3-phosphoglycerate + 2 H(+) = D-ribulose 1,5-bisphosphate + CO2 + H2O. It carries out the reaction D-ribulose 1,5-bisphosphate + O2 = 2-phosphoglycolate + (2R)-3-phosphoglycerate + 2 H(+). Functionally, ruBisCO catalyzes two reactions: the carboxylation of D-ribulose 1,5-bisphosphate, the primary event in carbon dioxide fixation, as well as the oxidative fragmentation of the pentose substrate in the photorespiration process. Both reactions occur simultaneously and in competition at the same active site. The chain is Ribulose bisphosphate carboxylase large chain from Ostrya virginiana (American hophornbeam).